A 91-amino-acid chain; its full sequence is Putative pterin-4-alpha-carbinolamine dehydratase (91 aa).

The protein belongs to the pterin-4-alpha-carbinolamine dehydratase family.

It carries out the reaction (4aS,6R)-4a-hydroxy-L-erythro-5,6,7,8-tetrahydrobiopterin = (6R)-L-erythro-6,7-dihydrobiopterin + H2O. The protein is Putative pterin-4-alpha-carbinolamine dehydratase of Sulfolobus acidocaldarius (strain ATCC 33909 / DSM 639 / JCM 8929 / NBRC 15157 / NCIMB 11770).